Reading from the N-terminus, the 522-residue chain is 2-isopropylmalate synthase (522 aa).

Residues 5–267 (VIIFDTTLRD…ETGINAKEIH (263 aa)) form the Pyruvate carboxyltransferase domain. Residues Asp14, His202, His204, and Asn238 each coordinate Mn(2+). The segment at 392–522 (QLQQLVVQSD…MQKNRELGGV (131 aa)) is regulatory domain.

This sequence belongs to the alpha-IPM synthase/homocitrate synthase family. LeuA type 1 subfamily. Homodimer. Requires Mn(2+) as cofactor.

It localises to the cytoplasm. It catalyses the reaction 3-methyl-2-oxobutanoate + acetyl-CoA + H2O = (2S)-2-isopropylmalate + CoA + H(+). It functions in the pathway amino-acid biosynthesis; L-leucine biosynthesis; L-leucine from 3-methyl-2-oxobutanoate: step 1/4. Catalyzes the condensation of the acetyl group of acetyl-CoA with 3-methyl-2-oxobutanoate (2-ketoisovalerate) to form 3-carboxy-3-hydroxy-4-methylpentanoate (2-isopropylmalate). In Shewanella baltica (strain OS185), this protein is 2-isopropylmalate synthase.